The chain runs to 1487 residues: Protein cft1 (1487 aa).

Residues 486 to 504 (DLDLDDEDLEDDDDDDLYG) show a composition bias toward acidic residues. Residues 486-513 (DLDLDDEDLEDDDDDDLYGEESASPEQA) form a disordered region.

It belongs to the CFT1 family.

The protein resides in the nucleus. RNA-binding component of the cleavage and polyadenylation factor (CPF) complex, which plays a key role in polyadenylation-dependent pre-mRNA 3'-end formation and cooperates with cleavage factors including the CFIA complex and hrp1/CFIB. Involved in poly(A) site recognition. May be involved in coupling transcription termination and mRNA 3'-end formation. The chain is Protein cft1 (paa-3) from Neurospora crassa (strain ATCC 24698 / 74-OR23-1A / CBS 708.71 / DSM 1257 / FGSC 987).